We begin with the raw amino-acid sequence, 220 residues long: Ribosomal RNA large subunit methyltransferase E (220 aa).

S-adenosyl-L-methionine contacts are provided by G60, W62, D92, D108, and D133. K173 (proton acceptor) is an active-site residue.

The protein belongs to the class I-like SAM-binding methyltransferase superfamily. RNA methyltransferase RlmE family.

The protein localises to the cytoplasm. It carries out the reaction uridine(2552) in 23S rRNA + S-adenosyl-L-methionine = 2'-O-methyluridine(2552) in 23S rRNA + S-adenosyl-L-homocysteine + H(+). Functionally, specifically methylates the uridine in position 2552 of 23S rRNA at the 2'-O position of the ribose in the fully assembled 50S ribosomal subunit. The polypeptide is Ribosomal RNA large subunit methyltransferase E (Burkholderia thailandensis (strain ATCC 700388 / DSM 13276 / CCUG 48851 / CIP 106301 / E264)).